The following is a 191-amino-acid chain: dTTP/UTP pyrophosphatase (191 aa).

D64 functions as the Proton acceptor in the catalytic mechanism.

The protein belongs to the Maf family. YhdE subfamily. A divalent metal cation serves as cofactor.

It is found in the cytoplasm. It catalyses the reaction dTTP + H2O = dTMP + diphosphate + H(+). The enzyme catalyses UTP + H2O = UMP + diphosphate + H(+). Its function is as follows. Nucleoside triphosphate pyrophosphatase that hydrolyzes dTTP and UTP. May have a dual role in cell division arrest and in preventing the incorporation of modified nucleotides into cellular nucleic acids. The chain is dTTP/UTP pyrophosphatase from Thermosipho africanus (strain TCF52B).